A 145-amino-acid polypeptide reads, in one-letter code: 3-hydroxyacyl-[acyl-carrier-protein] dehydratase FabZ (145 aa).

Residue His-51 is part of the active site.

This sequence belongs to the thioester dehydratase family. FabZ subfamily.

Its subcellular location is the cytoplasm. It catalyses the reaction a (3R)-hydroxyacyl-[ACP] = a (2E)-enoyl-[ACP] + H2O. Involved in unsaturated fatty acids biosynthesis. Catalyzes the dehydration of short chain beta-hydroxyacyl-ACPs and long chain saturated and unsaturated beta-hydroxyacyl-ACPs. This Staphylococcus epidermidis (strain ATCC 35984 / DSM 28319 / BCRC 17069 / CCUG 31568 / BM 3577 / RP62A) protein is 3-hydroxyacyl-[acyl-carrier-protein] dehydratase FabZ.